Here is a 349-residue protein sequence, read N- to C-terminus: Replication-associated protein (349 aa).

Residues 8–116 (RLNAKNYFLT…DGDTVEWGEF (109 aa)) form the CRESS-DNA virus Rep endonuclease domain. The RCR-1 signature appears at 15-18 (FLTY). 3 residues coordinate a divalent metal cation: Glu-49, His-57, and His-59. The RCR-2 signature appears at 57-59 (HLH). Tyr-103 functions as the For DNA cleavage activity in the catalytic mechanism. The short motif at 103 to 106 (YIDK) is the RCR-3 element. Residue Asp-107 coordinates a divalent metal cation. Positions 143–153 (AEEALQIIKEE) are binding to RBR1. The interval 156–176 (QHFFLQFHNIVSNANRIFQTP) is oligomerization. 221–228 (GPSRTGKT) contributes to the ATP binding site.

This sequence belongs to the geminiviridae Rep protein family. As to quaternary structure, homooligomer. Interacts with the replication enhancer protein (REn). Interacts with host retinoblastoma-related protein 1 (RBR1), and may thereby induce the transcription of host replicative enzymes even if the cell is not dividing anymore. Interacts with host PCNA. Interacts with host SCE1 protein. It depends on Mg(2+) as a cofactor. Mn(2+) serves as cofactor.

It is found in the host nucleus. Its function is as follows. Essential for the replication of viral ssDNA. The closed circular ssDNA genome is first converted to a superhelical dsDNA. Rep binds a specific region at the genome origin of replication. It introduces an endonucleolytic nick within the conserved sequence 5'-TAATATTAC-3' in the intergenic region of the genome present in all geminiviruses, thereby initiating the rolling circle replication (RCR). Following cleavage, binds covalently to the 5'-phosphate of DNA as a tyrosyl ester. The cleavage gives rise to a free 3'-OH that serves as a primer for the cellular DNA polymerase. The polymerase synthesizes the (+) strand DNA by rolling circle mechanism. After one round of replication, a Rep-catalyzed nucleotidyl transfer reaction releases a circular single-stranded virus genome, thereby terminating the replication. Displays origin-specific DNA cleavage, nucleotidyl transferase, ATPase and helicase activities. This Capsicum annuum (Capsicum pepper) protein is Replication-associated protein.